Here is a 622-residue protein sequence, read N- to C-terminus: MLPRRLLLVGEGNFSFAASLIDGLDPSVSVTATGFQHRAALEGDPVALENLKRLRERGVEVRFGVDCTQLSHALPADDRDFDRIYFNFPHCGRKAGVAKNRELLAKFFQSCADVLAKAGEVHVTLCRGQGGTPADKPQREWHNSWQVVAMAALGGFILSDVCPFSCEAVPGYKCTGYRSQDRPFHIEGALTYIFTQSLPFESCQPRTFRVRLEDRWFYFTEPEALPGKLNRRFLEASSCHPIRTINEKLIAELGKTFPLKRLKCPLPLLSRGGPSVFLPATCDLLPTFWIRLHEDNSCSEFQNGEITQEMEEIPVSVSECTLPESPVRDGCKGAQEGICGRVKLGLRPSLLVHVEAVIHSPDFLPASLHVLSGPVFRKCHILPFMMPAFHETLFILGFDNNMKESCLPSLLGHLKDALGNLLTQTLQEGSSLGTSVEFVLQPNGKDYIIHVKSLNFGPDCAENLIIGSILTSKIVKHKHQCFVFVSINLDLLVMLAYGISDWRILWTFDNRFLKRFAPGKIEHFKSYSLYPPCYVHDVSFWVDEKKAFDELEFHTVARAVSQDTVVSVQYRDRFQHPETRQVSLCYRLTYQTCDKALTPQLAAAMQSQFRKEIQRQLHVSPR.

One can recognise an FDX-ACB domain in the interval 529–622 (LYPPCYVHDV…IQRQLHVSPR (94 aa)).

The polypeptide is Ferredoxin-fold anticodon-binding domain-containing protein 1 homolog (Fdxacb1) (Mus musculus (Mouse)).